The chain runs to 446 residues: Phosphoglucosamine mutase (446 aa).

Ser103 functions as the Phosphoserine intermediate in the catalytic mechanism. The Mg(2+) site is built by Ser103, Asp242, Asp244, and Asp246. Ser103 bears the Phosphoserine mark.

This sequence belongs to the phosphohexose mutase family. The cofactor is Mg(2+). Post-translationally, activated by phosphorylation.

The enzyme catalyses alpha-D-glucosamine 1-phosphate = D-glucosamine 6-phosphate. Catalyzes the conversion of glucosamine-6-phosphate to glucosamine-1-phosphate. The protein is Phosphoglucosamine mutase of Vibrio vulnificus (strain CMCP6).